Consider the following 130-residue polypeptide: Small ribosomal subunit protein uS11 (130 aa).

This sequence belongs to the universal ribosomal protein uS11 family. Part of the 30S ribosomal subunit. Interacts with proteins S7 and S18. Binds to IF-3.

Located on the platform of the 30S subunit, it bridges several disparate RNA helices of the 16S rRNA. Forms part of the Shine-Dalgarno cleft in the 70S ribosome. The chain is Small ribosomal subunit protein uS11 from Prochlorococcus marinus (strain AS9601).